An 875-amino-acid chain; its full sequence is MDSRLALATEEPIKKDSLKRYKILCAVLLALLVIVSLGLGLGLGLRKPEEHIGSCRKKCFDSSHRGLEGCRCDSGCTDRGDCCWDFEDTCVKSTQIWTCNSFRCGETRLEAALCSCADDCLQRKDCCTDYKAVCQGEVPWVTEACASSQEPQCPEGFDQPPVILFSMDGFRAEYLQTWSTLLPNINKLKTCGLHSKYMRAMYPTKTFPNHYTIVTGLYPESHGIIDNNMYDVYLNKNFSLSSVEKSNPAWWSGQPIWLTAMYQGLKAASYYWPGSDVAVNGSFPNIYRNYSNSVPYESRIATLLQWLDLPKAERPSFYTIYVEEPDSAGHKSGPVSAGVIKALQLVDDAFGMLMEGLKQRNLHNCVNIIVLADHGMDQTSCDRVEYMTDYFPEINFYMYQGPAPRIRTRNIPQDFFTFNSEEIVRDLSCRKSDQHFKPYLTPDLPKRLHYAKNVRIDKVHLMVDRQWLAYRNKGSSNCEGGTHGYNNEFKSMEAIFLAHGPSFKEKTVIEPFENIEVYNLLCDLLHIQPAPNNGSHGSLNHLLKAPFYQPSHAEELSKSAGCGFTTPLPKDSLNCSCLALQTSGQEEQVNQRLNLSGGEVSATEKTNLPFGRPRVIQKNKDHCLLYHREYVSGFGKAMKMPMWSSYTVPKPGDTSSLPPTVPDCLRADVRVDPSESQKCSFYLADQNIDHGFLYPPAIKGNNESQYDALITSNLVPMYKEFKKMWDYFHKVLLIKYAIERNGVNVVSGPIFDYNYDGHFDAPDEITNYVAGTDVPVPTHYFVVLTSCKNKTHTPDSCPGWLDVLPFVVPHRPTNVESCPENKAEDLWVEERFKAHIARVRDVELLTGLDFYQEKTQPVSEILQLKTYLPTFETII.

The Cytoplasmic portion of the chain corresponds to 1–11; the sequence is MDSRLALATEE. The helical; Signal-anchor for type II membrane protein transmembrane segment at 12-30 threads the bilayer; that stretch reads PIKKDSLKRYKILCAVLLA. Over 31–875 the chain is Extracellular; sequence LLVIVSLGLG…TYLPTFETII (845 aa). 2 SMB domains span residues 51-94 and 95-139; these read HIGS…VKST and QIWT…GEVP. 10 cysteine pairs are disulfide-bonded: Cys55–Cys72, Cys59–Cys90, Cys70–Cys83, Cys76–Cys82, Cys99–Cys116, Cys104–Cys134, Cys114–Cys127, Cys120–Cys126, Cys145–Cys191, and Cys153–Cys365. Residues 79–81 carry the Cell attachment site motif; sequence RGD. The interval 161 to 545 is phosphodiesterase; it reads PVILFSMDGF…HGSLNHLLKA (385 aa). Asp168 is a Zn(2+) binding site. Position 205 (Lys205) interacts with ATP. Thr206 contacts Zn(2+). Thr206 functions as the Nucleophile in the catalytic mechanism. Asn227 lines the ATP pocket. Asn237 carries an N-linked (GlcNAc...) asparagine glycan. Residue Asp276 participates in ATP binding. N-linked (GlcNAc...) asparagine glycosylation is found at Asn280 and Asn289. Tyr290 is a binding site for ATP. The Zn(2+) site is built by Asp326, His330, Asp373, and His374. Disulfide bonds link Cys381-Cys478, Cys429-Cys818, Cys562-Cys623, Cys575-Cys679, Cys577-Cys664, and Cys787-Cys797. Residue His483 coordinates Zn(2+). Asn533, Asn574, Asn594, and Asn702 each carry an N-linked (GlcNAc...) asparagine glycan. The tract at residues 582 to 875 is nuclease; it reads TSGQEEQVNQ…TYLPTFETII (294 aa). 5 residues coordinate Ca(2+): Asp752, Asn754, Asp756, His758, and Asp760. Asn789 is a glycosylation site (N-linked (GlcNAc...) asparagine).

Belongs to the nucleotide pyrophosphatase/phosphodiesterase family. In terms of assembly, monomer and homodimer. Zn(2+) is required as a cofactor. The N-terminal is blocked. In terms of processing, N-glycosylated. N-glycosylation is necessary for normal transport to the cell membrane, but is not the apical targeting signal. As to expression, detected in intestinal epithelium and liver (at protein level).

It localises to the cell membrane. Its subcellular location is the apical cell membrane. The protein localises to the secreted. It catalyses the reaction Hydrolytically removes 5'-nucleotides successively from the 3'-hydroxy termini of 3'-hydroxy-terminated oligonucleotides.. It carries out the reaction a ribonucleoside 5'-triphosphate + H2O = a ribonucleoside 5'-phosphate + diphosphate + H(+). The enzyme catalyses ATP + H2O = AMP + diphosphate + H(+). The catalysed reaction is CTP + H2O = CMP + diphosphate + H(+). It catalyses the reaction GTP + H2O = GMP + diphosphate + H(+). It carries out the reaction UTP + H2O = UMP + diphosphate + H(+). The enzyme catalyses UDP-N-acetyl-alpha-D-glucosamine + H2O = N-acetyl-alpha-D-glucosamine 1-phosphate + UMP + 2 H(+). The catalysed reaction is P(1),P(3)-bis(5'-adenosyl) triphosphate + H2O = AMP + ADP + 2 H(+). It catalyses the reaction P(1),P(4)-bis(5'-adenosyl) tetraphosphate + H2O = AMP + ATP + 2 H(+). It carries out the reaction P(1),P(5)-bis(5'-adenosyl) pentaphosphate + H2O = adenosine 5'-tetraphosphate + AMP + 2 H(+). The enzyme catalyses P(1),P(4)-bis(5'-guanosyl) tetraphosphate + H2O = GMP + GTP + 2 H(+). Its function is as follows. Hydrolase that metabolizes extracellular nucleotides, including ATP, GTP, UTP and CTP. Limits mast cells and basophils response during inflammation and during the chronic phases of allergic responses by eliminating extracellular ATP, a signaling molecule activating these cells in an autocrine manner. Metabolizes extracellular ATP in the lumen of the small intestine, and thereby prevents ATP-induced apoptosis of intestinal plasmacytoid dendritic cells. Has a broad specificity and can also hydrolyze UDP-GlcNAc into UMP and GlcNAc-1-phosphate and potentially several other intracellular nucleotide sugars, including UDP-GalNAc, CMP-NeuAc, GDP-Fuc, and UDP-GlcA. Thereby, could modulate glycan biosynthesis and protein glycosylation. Can hydrolyze extracellular dinucleoside polyphosphates, including the vasoactive adenosine polyphosphates as well. In addition, displays an alkaline phosphodiesterase activity in vitro. This Rattus norvegicus (Rat) protein is Ectonucleotide pyrophosphatase/phosphodiesterase family member 3.